A 119-amino-acid polypeptide reads, in one-letter code: UPF0344 protein lp_1373 (119 aa).

A run of 4 helical transmembrane segments spans residues 1–21, 32–52, 60–80, and 92–112; these read MYLL…AIGL, FLIL…ALAI, WLTL…EVAF, and LVTL…GLHW.

It belongs to the UPF0344 family.

It localises to the cell membrane. This chain is UPF0344 protein lp_1373, found in Lactiplantibacillus plantarum (strain ATCC BAA-793 / NCIMB 8826 / WCFS1) (Lactobacillus plantarum).